A 162-amino-acid polypeptide reads, in one-letter code: SsrA-binding protein (162 aa).

The protein belongs to the SmpB family.

The protein resides in the cytoplasm. Required for rescue of stalled ribosomes mediated by trans-translation. Binds to transfer-messenger RNA (tmRNA), required for stable association of tmRNA with ribosomes. tmRNA and SmpB together mimic tRNA shape, replacing the anticodon stem-loop with SmpB. tmRNA is encoded by the ssrA gene; the 2 termini fold to resemble tRNA(Ala) and it encodes a 'tag peptide', a short internal open reading frame. During trans-translation Ala-aminoacylated tmRNA acts like a tRNA, entering the A-site of stalled ribosomes, displacing the stalled mRNA. The ribosome then switches to translate the ORF on the tmRNA; the nascent peptide is terminated with the 'tag peptide' encoded by the tmRNA and targeted for degradation. The ribosome is freed to recommence translation, which seems to be the essential function of trans-translation. The polypeptide is SsrA-binding protein (Sorangium cellulosum (strain So ce56) (Polyangium cellulosum (strain So ce56))).